The following is a 716-amino-acid chain: Polyribonucleotide nucleotidyltransferase (716 aa).

Mg(2+) contacts are provided by Asp-495 and Asp-501. Residues 562–621 (PRLFRIQINPEQIGLVIGPGGKTIRSITEQTGAKIDIEDTGAVTISAVDADSALRAKSII) form the KH domain. Positions 631-699 (GDVYIGKVTR…QKGRVNLTRK (69 aa)) constitute an S1 motif domain.

This sequence belongs to the polyribonucleotide nucleotidyltransferase family. The cofactor is Mg(2+).

The protein resides in the cytoplasm. It carries out the reaction RNA(n+1) + phosphate = RNA(n) + a ribonucleoside 5'-diphosphate. In terms of biological role, involved in mRNA degradation. Catalyzes the phosphorolysis of single-stranded polyribonucleotides processively in the 3'- to 5'-direction. The chain is Polyribonucleotide nucleotidyltransferase from Synechococcus sp. (strain ATCC 27144 / PCC 6301 / SAUG 1402/1) (Anacystis nidulans).